An 830-amino-acid chain; its full sequence is V-type proton ATPase 116 kDa subunit a 3 (830 aa).

Topologically, residues 1-385 (MGSMFRSEEV…DAYGVGRYQE (385 aa)) are cytoplasmic. Residues 139–158 (QLAAAHTDGASERTPLLQAP) form a disordered region. A helical transmembrane segment spans residues 386-404 (VNPAPYTIITFPFLFAVMF). The Vacuolar portion of the chain corresponds to 405 to 406 (GD). Residues 407 to 423 (VGHGLLMFLFALAMVLA) form a helical membrane-spanning segment. Over 424–438 (ENRPAVKAAQNEIWQ) the chain is Cytoplasmic. A helical transmembrane segment spans residues 439 to 468 (TFFRGRYLLLLMGLFSIYTGFIYNECFSRA). The Vacuolar portion of the chain corresponds to 469 to 532 (TSIFPSGWSV…AANHLSFLNS (64 aa)). Residues 533–552 (FKMKMSVILGVVHMAFGVVL) form a helical membrane-spanning segment. The Cytoplasmic portion of the chain corresponds to 553 to 570 (GVFNHVHFGQRHRLLLET). A helical membrane pass occupies residues 571–591 (LPELTFLLGLFGYLVFLVIYK). The Vacuolar segment spans residues 592–635 (WLCVWAARAASAPSILIHFINMFLFSHSPSNRLLYPRQEVVQAT). A helical membrane pass occupies residues 636-655 (LVVLALAMVPILLLGTPLHL). At 656–720 (LHRHRRRLRR…EVLMHQAIHT (65 aa)) the chain is on the cytoplasmic side. Positions 681–701 (LPDASVNGWSSDEEKAGGLDD) are disordered. Residues 721–745 (IEFCLGCVSNTASYLRLWALSLAHA) form a helical membrane-spanning segment. Topologically, residues 746 to 766 (QLSEVLWAMVMRIGLGLGREV) are vacuolar. The chain crosses the membrane as a helical span at residues 767–807 (GVAAVVLVPIFAAFAVMTVAILLVMEGLSAFLHALRLHWVE). Residues 808–830 (FQNKFYSGTGYKLSPFTFAATDD) lie on the Cytoplasmic side of the membrane.

The protein belongs to the V-ATPase 116 kDa subunit family. In terms of assembly, V-ATPase is a heteromultimeric enzyme made up of two complexes: the ATP-hydrolytic V1 complex and the proton translocation V0 complex. The V1 complex consists of three catalytic AB heterodimers that form a heterohexamer, three peripheral stalks each consisting of EG heterodimers, one central rotor including subunits D and F, and the regulatory subunits C and H. The proton translocation complex V0 consists of the proton transport subunit a, a ring of proteolipid subunits c9c'', rotary subunit d, subunits e and f, and the accessory subunits ATP6AP1/Ac45 and ATP6AP2/PRR. In terms of tissue distribution, isoform long is highly expressed in osteoclastomas. Isoform short is highly expressed in thymus.

Its subcellular location is the membrane. Subunit of the V0 complex of vacuolar(H+)-ATPase (V-ATPase), a multisubunit enzyme composed of a peripheral complex (V1) that hydrolyzes ATP and a membrane integral complex (V0) that translocates protons. V-ATPase is responsible for acidifying and maintaining the pH of intracellular compartments and in some cell types, is targeted to the plasma membrane, where it is responsible for acidifying the extracellular environment. Seems to be directly involved in T-cell activation. This is V-type proton ATPase 116 kDa subunit a 3 (TCIRG1) from Homo sapiens (Human).